A 115-amino-acid polypeptide reads, in one-letter code: Skin calcitonin gene-related peptide (115 aa).

Positions 1 to 25 (MVLLKISSLLAVLGLLVCQMYSSQA) are cleaved as a signal peptide. A propeptide spans 26-69 (APARRALEPLPDRVTEAHRLLRALIRELTAEDMEASSSGAAHKR) (removed in mature form by a carboxypeptidase). An intrachain disulfide couples Cys-71 to Cys-76. Phenylalanine amide is present on Phe-106. The propeptide at 107–115 (GRRRRSLHV) is removed in mature form by an endoprotease.

As to expression, skin, intestine and brain.

It localises to the secreted. Its function is as follows. CGRP induces vasodilation. It dilates a variety of vessels including the coronary, cerebral and systemic vasculature. Its abundance in the CNS also points toward a neurotransmitter or neuromodulator role. The chain is Skin calcitonin gene-related peptide from Phyllomedusa bicolor (Two-colored leaf frog).